We begin with the raw amino-acid sequence, 89 residues long: Small ribosomal subunit protein uS19 (89 aa).

The protein belongs to the universal ribosomal protein uS19 family.

Protein S19 forms a complex with S13 that binds strongly to the 16S ribosomal RNA. This Akkermansia muciniphila (strain ATCC BAA-835 / DSM 22959 / JCM 33894 / BCRC 81048 / CCUG 64013 / CIP 107961 / Muc) protein is Small ribosomal subunit protein uS19.